The primary structure comprises 443 residues: Methylenetetrahydrofolate--tRNA-(uracil-5-)-methyltransferase TrmFO (443 aa).

8-13 (GAGLAG) is a binding site for FAD.

Belongs to the MnmG family. TrmFO subfamily. Requires FAD as cofactor.

The protein localises to the cytoplasm. The enzyme catalyses uridine(54) in tRNA + (6R)-5,10-methylene-5,6,7,8-tetrahydrofolate + NADH + H(+) = 5-methyluridine(54) in tRNA + (6S)-5,6,7,8-tetrahydrofolate + NAD(+). It catalyses the reaction uridine(54) in tRNA + (6R)-5,10-methylene-5,6,7,8-tetrahydrofolate + NADPH + H(+) = 5-methyluridine(54) in tRNA + (6S)-5,6,7,8-tetrahydrofolate + NADP(+). Catalyzes the folate-dependent formation of 5-methyl-uridine at position 54 (M-5-U54) in all tRNAs. This Thermus thermophilus (strain ATCC 27634 / DSM 579 / HB8) protein is Methylenetetrahydrofolate--tRNA-(uracil-5-)-methyltransferase TrmFO.